The chain runs to 490 residues: Bifunctional protein HldE (490 aa).

Residues 1–330 (MSRFDTLLQS…RKILPHASLA (330 aa)) form a ribokinase region. An ATP-binding site is contributed by 205–208 (NRKE). The active site involves D275. The cytidylyltransferase stretch occupies residues 358–490 (FTNGCFDILH…LVEKAREGTT (133 aa)).

It in the N-terminal section; belongs to the carbohydrate kinase PfkB family. This sequence in the C-terminal section; belongs to the cytidylyltransferase family. As to quaternary structure, homodimer.

The catalysed reaction is D-glycero-beta-D-manno-heptose 7-phosphate + ATP = D-glycero-beta-D-manno-heptose 1,7-bisphosphate + ADP + H(+). The enzyme catalyses D-glycero-beta-D-manno-heptose 1-phosphate + ATP + H(+) = ADP-D-glycero-beta-D-manno-heptose + diphosphate. It participates in nucleotide-sugar biosynthesis; ADP-L-glycero-beta-D-manno-heptose biosynthesis; ADP-L-glycero-beta-D-manno-heptose from D-glycero-beta-D-manno-heptose 7-phosphate: step 1/4. The protein operates within nucleotide-sugar biosynthesis; ADP-L-glycero-beta-D-manno-heptose biosynthesis; ADP-L-glycero-beta-D-manno-heptose from D-glycero-beta-D-manno-heptose 7-phosphate: step 3/4. Functionally, catalyzes the phosphorylation of D-glycero-D-manno-heptose 7-phosphate at the C-1 position to selectively form D-glycero-beta-D-manno-heptose-1,7-bisphosphate. Its function is as follows. Catalyzes the ADP transfer from ATP to D-glycero-beta-D-manno-heptose 1-phosphate, yielding ADP-D-glycero-beta-D-manno-heptose. This is Bifunctional protein HldE from Rhodopseudomonas palustris (strain BisB5).